The primary structure comprises 283 residues: Alpha-ketoglutarate-dependent taurine dioxygenase (283 aa).

Positions 70, 73, and 95 each coordinate taurine. Residues His-99 and Asp-101 each contribute to the Fe cation site. Taurine is bound at residue Val-102. Thr-126 provides a ligand contact to 2-oxoglutarate. Residues Trp-128, Trp-240, and Trp-248 each carry the 3-hydroxytryptophan; by autocatalysis modification. Residue His-255 participates in Fe cation binding. 3 residues coordinate 2-oxoglutarate: His-255, Arg-266, and Arg-270. Arg-270 is a binding site for taurine.

It belongs to the TfdA dioxygenase family. In terms of assembly, homodimer. Was later shown to be a homotetramer arranged as a dimer of two dimers. Fe(2+) is required as a cofactor.

It catalyses the reaction taurine + 2-oxoglutarate + O2 = aminoacetaldehyde + sulfite + succinate + CO2 + H(+). The protein operates within organosulfur degradation; taurine degradation via aerobic pathway; aminoacetaldehyde and sulfite from taurine: step 1/1. Its activity is regulated as follows. Activated by ascorbate and inhibited by divalent metal ions such as zinc, copper and cobalt. Its function is as follows. Catalyzes the alpha-ketoglutarate-dependent hydroxylation of taurine yielding sulfite and aminoacetaldehyde after decomposition of an unstable intermediate. Is required for the utilization of taurine (2-aminoethanesulfonate) as an alternative sulfur source for growth in the absence of sulfate. To a lesser extent, pentanesulfonate, 3-(N-morpholino)propanesulfonate and 1,3-dioxo-2-isoindolineethanesulfonate are also desulfonated by this enzyme in vitro; however, desulfonation by TauD of organosulfonates other than taurine seem to be of little or no importance for sulfur metabolism in vivo. The chain is Alpha-ketoglutarate-dependent taurine dioxygenase (tauD) from Escherichia coli (strain K12).